Consider the following 483-residue polypeptide: BTB/POZ domain and ankyrin repeat-containing protein COCH (483 aa).

The 81-residue stretch at Ser25 to Pro105 folds into the BTB domain. The segment at Arg111 to Thr125 adopts a C2HC NPR-type zinc-finger fold. Positions 114, 119, 121, and 124 each coordinate Zn(2+). ANK repeat units lie at residues Gln249 to Asp278, Glu279 to Phe308, Thr313 to Val342, and Asp346 to Leu380. 2 disordered regions span residues Glu395 to Met435 and Met450 to Tyr483. Low complexity predominate over residues Asn398–Asn414. The span at Asp456–Asn465 shows a compositional bias: basic and acidic residues.

Belongs to the plant 'ANKYRIN-BTB/POZ' family. 'NOOT-BOP-COCH-like' (NBCL) subfamily. In terms of assembly, homodimer.

Its subcellular location is the nucleus. It is found in the cytoplasm. It localises to the cell membrane. The protein operates within protein modification; protein ubiquitination. Functionally, may act as a substrate-specific adapter of an E3 ubiquitin-protein ligase complex (CUL3-RBX1-BTB) which mediates the ubiquitination and subsequent proteasomal degradation of target proteins. Transcriptional co-regulator involved in the promotion of leaf and floral meristem fate and determinacy. Promotes normal stipule growth and development. Required for the abscission of senescent organs, probably by regulating the cell wall disorganization in abscission zones (AZs, e.g. pulvini at the base of leaves). Down-regulates UNI expression in primordia of leaves and secondary inflorescences, and thereby controls their sizes and/or structures. Involved in the coordination of the symbiotic nodule developmental program. Promotes the formation of root nodules by interacting directly with APP1 to modulate the expression of the nuclear transcription factor Y subunit (NF-YA1), a key nodulin. Necessary for the robust maintenance of nodule identity throughout the nodule developmental program. The protein is BTB/POZ domain and ankyrin repeat-containing protein COCH of Pisum sativum (Garden pea).